A 153-amino-acid chain; its full sequence is Sec-independent protein translocase protein TatB (153 aa).

The helical transmembrane segment at Met-1–Gly-21 threads the bilayer. Residues Met-78–Pro-153 are disordered.

This sequence belongs to the TatB family. As to quaternary structure, the Tat system comprises two distinct complexes: a TatABC complex, containing multiple copies of TatA, TatB and TatC subunits, and a separate TatA complex, containing only TatA subunits. Substrates initially bind to the TatABC complex, which probably triggers association of the separate TatA complex to form the active translocon.

The protein resides in the cell inner membrane. Part of the twin-arginine translocation (Tat) system that transports large folded proteins containing a characteristic twin-arginine motif in their signal peptide across membranes. Together with TatC, TatB is part of a receptor directly interacting with Tat signal peptides. TatB may form an oligomeric binding site that transiently accommodates folded Tat precursor proteins before their translocation. The protein is Sec-independent protein translocase protein TatB of Pseudomonas savastanoi pv. phaseolicola (strain 1448A / Race 6) (Pseudomonas syringae pv. phaseolicola (strain 1448A / Race 6)).